Here is a 210-residue protein sequence, read N- to C-terminus: MILHPSLASANPLHYGRELTALDNLDFGSLHLDIEDSSFINNITFGMKTVQAVARQTPHPLSFHFMLARPQRWFNALAEIRPAWIFVHAETLDYPSETLTEIRHTGARAGLVFNPATPIDAWRYLASELDGVMVMTSEPDGQGQRFIPSMCEKIQKVRTAFPQTECWADGGITLAAAQQLAAAGAQHMVIGRALFSSSDYRATLAQFATL.

Position 6 (Ser6) interacts with substrate. Positions 31, 33, and 64 each coordinate a divalent metal cation. Asp33 acts as the Proton acceptor in catalysis. Substrate is bound by residues His64, 140–143 (DGQG), 169–171 (DGG), and 191–192 (GR). Position 169 (Asp169) interacts with a divalent metal cation. Asp169 functions as the Proton donor in the catalytic mechanism.

This sequence belongs to the ribulose-phosphate 3-epimerase family. Co(2+) serves as cofactor. Requires Fe(2+) as cofactor. It depends on Mn(2+) as a cofactor. Zn(2+) is required as a cofactor.

The protein operates within carbohydrate degradation. Its function is as follows. Probable pentose-5-phosphate 3-epimerase. The polypeptide is Protein SgcE (sgcE) (Escherichia coli (strain K12)).